We begin with the raw amino-acid sequence, 160 residues long: Nucleotide-binding protein BAV0791 (160 aa).

Belongs to the YajQ family.

Nucleotide-binding protein. In Bordetella avium (strain 197N), this protein is Nucleotide-binding protein BAV0791.